The sequence spans 249 residues: 2,3-bisphosphoglycerate-dependent phosphoglycerate mutase (249 aa).

Residues 8-15 (RHGESTWN), 21-22 (TG), arginine 60, 87-90 (ERHY), lysine 98, 114-115 (RR), and 183-184 (GN) each bind substrate. The active-site Tele-phosphohistidine intermediate is the histidine 9. The active-site Proton donor/acceptor is the glutamate 87.

Belongs to the phosphoglycerate mutase family. BPG-dependent PGAM subfamily.

The catalysed reaction is (2R)-2-phosphoglycerate = (2R)-3-phosphoglycerate. Its pathway is carbohydrate degradation; glycolysis; pyruvate from D-glyceraldehyde 3-phosphate: step 3/5. Catalyzes the interconversion of 2-phosphoglycerate and 3-phosphoglycerate. The chain is 2,3-bisphosphoglycerate-dependent phosphoglycerate mutase from Methanoregula boonei (strain DSM 21154 / JCM 14090 / 6A8).